Reading from the N-terminus, the 979-residue chain is MAGRARSRLLLLLGLLALQSSCLAFRSPLSVFKRFKETTRSFSNECLGTTRPITPIDSSDFTLDIRMPGVTPKESDTYFCMSMRLPVDEEAFVIDFKPRASMDTVHHMLLFGCNMPSSTGSYWFCDEGTCTDKANILYAWARNAPPTRLPKGVGFRVGGETGSKYFVLQVHYGDISAFRDNHKDCSGVSLHLTRVPQPLIAGMYLMMSVNTVIPPGEKVVNSDISCHYKMYPMHVFAYRVHTHHLGKVVSGYRVRNGQWTLIGRQSPQLPQAFYPVEHPVDVAFGDILAARCVFTGEGRTEATHIGGTSSDEMCNLYIMYYMEAKHAVSFMTCTQNVAPDMFRTIPEEANIPIPVKSDMVMIHGHHKETENKEKSALIQQPKQGEEEAFEQGDFYSLLSKLLGEREDVVHVHKYNPTEKTESGSDLVAEIANVVQKKDLGRSDAREGAEHEEGGNAILVRDRIHKFHRLESTLRPAESRALSFQQPGEGPWEPELAGDFHVEEALEWPGVYLLPGQVSGVALDSKNNLVIFHRGDHVWDGNSFDSKFVYQQRGLGPIEEDTILVIDPNKAEILQSSGKNLFYLPHGLSIDTDGNYWVTDVALHQVFKLEPRSKEGPLLVLGRSMQPGSDQNHFCQPTDVAVEPSTGAVFVSDGYCNSRIVQFSPSGKFITQWGEESSGSSPKPGQFSVPHSLALVPHLNQLCVADRENGRIQCFKTDTKEFVREIKHASFGRNVFAISYIPGFLFAVNGKPYFGDQEPVQGFVMNFSSGEIIDVFKPVRKHFDMPHDIVASEDGTVYIGDAHTNTVWKFTLTESRLEVEHRSVKKAGIEVPEIKEAEAVVEPKVKNKPTSSELQKMQEKKKLIKDPGSGVPVVLITTLLVIPVVVLLAIAMFIRWKKSRAFGDHDRKLESSSGRVLGRLRGKGSSGLNLGNFFASRKGYSRKGFDRVSTEGSDQEKDEDDGSESEEEYSAPLPTPAPSS.

The first 24 residues, 1–24, serve as a signal peptide directing secretion; it reads MAGRARSRLLLLLGLLALQSSCLA. The interval 1–497 is peptidylglycine alpha-hydroxylating monooxygenase; it reads MAGRARSRLL…EGPWEPELAG (497 aa). Positions 25–34 are excised as a propeptide; sequence FRSPLSVFKR. The Intragranular portion of the chain corresponds to 35-869; sequence FKETTRSFSN…KKLIKDPGSG (835 aa). Disulfide bonds link cysteine 46–cysteine 185, cysteine 80–cysteine 125, cysteine 113–cysteine 130, cysteine 226–cysteine 333, and cysteine 292–cysteine 314. 2 residues coordinate Cu(2+): histidine 106 and histidine 107. Cu(2+) is bound by residues histidine 171, histidine 241, histidine 243, and methionine 313. Residues 498–823 are peptidyl-alpha-hydroxyglycine alpha-amidating lyase; the sequence is DFHVEEALEW…SRLEVEHRSV (326 aa). 4 NHL repeats span residues 501-544, 570-611, 620-665, and 673-717; these read VEEA…NSFD, AEIL…LEPR, LGRS…FSPS, and GEES…FKTD. A Ca(2+)-binding site is contributed by valine 520. Arginine 533 serves as a coordination point for a protein. Residue histidine 585 participates in Zn(2+) binding. A Ca(2+)-binding site is contributed by leucine 587. The cysteines at positions 634 and 655 are disulfide-linked. Residue tyrosine 654 coordinates a protein. Histidine 690 contributes to the Zn(2+) binding site. A disulfide bridge links cysteine 702 with cysteine 713. Arginine 706 lines the a protein pocket. Asparagine 765 carries an N-linked (GlcNAc...) asparagine glycan. The stretch at 769-812 is one NHL 5 repeat; it reads GEIIDVFKPVRKHFDMPHDIVASEDGTVYIGDAHTNTVWKFTLT. Residue histidine 786 participates in Zn(2+) binding. A Ca(2+)-binding site is contributed by aspartate 787. Residues 870 to 893 form a helical membrane-spanning segment; it reads VPVVLITTLLVIPVVVLLAIAMFI. At 894–979 the chain is on the cytoplasmic side; it reads RWKKSRAFGD…APLPTPAPSS (86 aa). Phosphoserine occurs at positions 924, 925, 935, and 948. Positions 931-948 are interaction with RASSF9; that stretch reads NFFASRKGYSRKGFDRVS. Residues 943–979 are disordered; the sequence is GFDRVSTEGSDQEKDEDDGSESEEEYSAPLPTPAPSS. A Phosphothreonine modification is found at threonine 949. Serine 952 carries the phosphoserine; by UHMK1 modification. Over residues 955–968 the composition is skewed to acidic residues; it reads EKDEDDGSESEEEY. Serine 964 bears the Phosphoserine mark.

In the C-terminal section; belongs to the peptidyl-alpha-hydroxyglycine alpha-amidating lyase family. It in the N-terminal section; belongs to the copper type II ascorbate-dependent monooxygenase family. Monomer. Interacts with RASSF9. Zn(2+) is required as a cofactor. Cu(2+) serves as cofactor.

Its subcellular location is the cytoplasmic vesicle. The protein localises to the secretory vesicle membrane. The catalysed reaction is a [peptide]-C-terminal glycine + 2 L-ascorbate + O2 = a [peptide]-C-terminal (2S)-2-hydroxyglycine + 2 monodehydro-L-ascorbate radical + H2O. It carries out the reaction a [peptide]-C-terminal (2S)-2-hydroxyglycine = a [peptide]-C-terminal amide + glyoxylate. It catalyses the reaction N-dodecanoylglycine + 2 L-ascorbate + O2 = N-dodecanoyl-(2S)-hydroxyglycine + 2 monodehydro-L-ascorbate radical + H2O. The enzyme catalyses N-dodecanoyl-(2S)-hydroxyglycine = dodecanamide + glyoxylate. The catalysed reaction is N-(9Z,12Z,15Z)-octadecatrienoylglycine + 2 L-ascorbate + O2 = N-(9Z,12Z,15Z)-octadecatrienoyl-(2S)-hydroxyglycine + 2 monodehydro-L-ascorbate radical + H2O. It carries out the reaction N-(9Z,12Z,15Z)-octadecatrienoyl-(2S)-hydroxyglycine = (9Z,12Z,15Z)-octadecatrienamide + glyoxylate. It catalyses the reaction N-(9Z-octadecenoyl)glycine + 2 L-ascorbate + O2 = N-(9Z-octadecenoyl)-(2S)-hydroxyglycine + 2 monodehydro-L-ascorbate radical + H2O. The enzyme catalyses N-(9Z-octadecenoyl)-(2S)-hydroxyglycine = (9Z)-octadecenamide + glyoxylate. The catalysed reaction is N-tetradecanoylglycine + 2 L-ascorbate + O2 = N-tetradecanoyl-(2S)-hydroxyglycine + 2 monodehydro-L-ascorbate radical + H2O. It carries out the reaction N-tetradecanoyl-(2S)-hydroxyglycine = tetradecamide + glyoxylate. It catalyses the reaction N-decanoylglycine + 2 L-ascorbate + O2 = N-decanoyl-(2S)-hydroxyglycine + 2 monodehydro-L-ascorbate radical + H2O. The enzyme catalyses N-decanoyl-(2S)-hydroxyglycine = decanamide + glyoxylate. The catalysed reaction is N-octanoylglycine + 2 L-ascorbate + O2 = N-octanoyl-(2S)-hydroxyglycine + 2 monodehydro-L-ascorbate radical + H2O. It carries out the reaction N-octanoyl-(2S)-hydroxyglycine = octanamide + glyoxylate. Its activity is regulated as follows. PAM activity is inhibited by EDTA, phenylglyoxal and diethyl pyrocarbonate. PAL activity is stimulated by cadmium and inhibited by mercury. Bifunctional enzyme that catalyzes amidation of the C-terminus of proteins. Alpha-amidation is present at the C-terminus of many endocrine hormones and neuropeptides and is required for their activity. C-terminal amidation also takes place in response to protein fragmentation triggered by oxidative stress, promoting degradation of amidated protein fragments by the proteasome. Alpha-amidation involves two sequential reactions, both of which are catalyzed by separate catalytic domains of the enzyme. The first step, catalyzed by peptidyl alpha-hydroxylating monooxygenase (PHM) domain, is the copper-, ascorbate-, and O2- dependent stereospecific hydroxylation (with S stereochemistry) at the alpha-carbon (C-alpha) of the C-terminal glycine of the peptidylglycine substrate. The second step, catalyzed by the peptidylglycine amidoglycolate lyase (PAL) domain, is the zinc-dependent cleavage of the N-C-alpha bond, producing the alpha-amidated peptide and glyoxylate. Similarly, catalyzes the two-step conversion of an N-fatty acylglycine to a primary fatty acid amide and glyoxylate. The protein is Peptidyl-glycine alpha-amidating monooxygenase of Mus musculus (Mouse).